The primary structure comprises 483 residues: Probable 4-hydroxyphenylacetate 3-monooxygenase (483 aa).

Residues arginine 104–tyrosine 108 and histidine 150 contribute to the substrate site. Residues histidine 150–phenylalanine 152, glutamine 156–arginine 159, and threonine 193 contribute to the FAD site. Alanine 206 to proline 207 is a substrate binding site. Aspartate 452–arginine 455 provides a ligand contact to FAD.

The protein belongs to the FADH(2)-utilizing monooxygenase family.

It carries out the reaction 4-hydroxyphenylacetate + FADH2 + O2 = 3,4-dihydroxyphenylacetate + FAD + H2O + H(+). Its pathway is aromatic compound metabolism; 4-hydroxyphenylacetate degradation; pyruvate and succinate semialdehyde from 4-hydroxyphenylacetate: step 1/7. Its function is as follows. Catalyzes the hydroxylation of 4-hydroxyphenylacetic acid (4HPA), leading to the production of 3,4-dihydroxyphenylacetic acid (DHPA). The chain is Probable 4-hydroxyphenylacetate 3-monooxygenase (yoaI) from Bacillus subtilis (strain 168).